The sequence spans 367 residues: D-alanine--D-alanine ligase (367 aa).

The ATP-grasp domain occupies 150–357; sequence KKLLASAGLP…YPTLLATMVE (208 aa). Position 178–233 (178–233) interacts with ATP; that stretch reads RERLGLPVFVKPSRGGSSIGVSRVTAWDELPAAIELARRHDPKVIIEAAVPGRELE. Aspartate 312, glutamate 324, and asparagine 326 together coordinate Mg(2+).

This sequence belongs to the D-alanine--D-alanine ligase family. Requires Mg(2+) as cofactor. It depends on Mn(2+) as a cofactor.

It localises to the cytoplasm. The enzyme catalyses 2 D-alanine + ATP = D-alanyl-D-alanine + ADP + phosphate + H(+). Its pathway is cell wall biogenesis; peptidoglycan biosynthesis. Its function is as follows. Cell wall formation. This Mycolicibacterium gilvum (strain PYR-GCK) (Mycobacterium gilvum (strain PYR-GCK)) protein is D-alanine--D-alanine ligase.